The primary structure comprises 332 residues: DNA double-strand break repair nuclease NurA (332 aa).

Mn(2+)-binding residues include Asp57 and Asp132.

Belongs to the NurA family. It depends on Mn(2+) as a cofactor.

In terms of biological role, involved in DNA double-strand break (DSB) repair. Probably acts with HerA to stimulate resection of the 5' strand and produce the long 3' single-strand that is required for RadA loading. Exhibits both single-stranded endonuclease activity and 5'-3' exonuclease activity on single-stranded and double-stranded DNA. In Sulfolobus acidocaldarius (strain ATCC 33909 / DSM 639 / JCM 8929 / NBRC 15157 / NCIMB 11770), this protein is DNA double-strand break repair nuclease NurA.